Here is a 547-residue protein sequence, read N- to C-terminus: KsdD-like steroid dehydrogenase MSMEG_5835 (547 aa).

Residue D5–N36 participates in FAD binding.

It belongs to the FAD-dependent oxidoreductase 2 family. It depends on FAD as a cofactor.

It participates in lipid metabolism; steroid biosynthesis. Functionally, able to catalyze the elimination of the C-1 and C-2 hydrogen atoms of the A-ring from the polycyclic ring structure of 3-ketosteroids, but the ketosteroid dehydrogenase activity is low compared to KsdD in the cholesterol degradation process. The low activity could be due to different substrate specificity. The chain is KsdD-like steroid dehydrogenase MSMEG_5835 from Mycolicibacterium smegmatis (strain ATCC 700084 / mc(2)155) (Mycobacterium smegmatis).